Consider the following 350-residue polypeptide: MAGGDREKALDAALANIEKQFGKGSVMRLGDEVRAPLEIIPSGSIALDVALGLGGFPRGRVVEIYGPESSGKTTVALHAVANAQRAGGIVAFIDAEHALDPDYAKNLGVDTDALLVSQPDSGEQALEIADMLIRSGALDLIVIDSVAALVPRAEIEGEMGDSHVGLQARLMSQALRKMTGALNNSKTTMIFINQLREKIGVMFGSPETTTGGKALKFYASVRLDVRRIETLKDGTDMVGNRTRVKVVKNKVAPPFKQAEFDIMYGKGISREGGLIDVGVEAGLVRKAGAWYTYEGDQLGQGKENARAFLRDNPDLANELEKKILEKLGVGPTVDQDVAELPAEPIGVGDF.

Residue 66–73 (GPESSGKT) participates in ATP binding.

Belongs to the RecA family.

It localises to the cytoplasm. Functionally, can catalyze the hydrolysis of ATP in the presence of single-stranded DNA, the ATP-dependent uptake of single-stranded DNA by duplex DNA, and the ATP-dependent hybridization of homologous single-stranded DNAs. It interacts with LexA causing its activation and leading to its autocatalytic cleavage. This chain is Protein RecA, found in Nocardioides sp. (strain ATCC BAA-499 / JS614).